We begin with the raw amino-acid sequence, 311 residues long: Cyclin-dependent kinase B1-2 (311 aa).

The Protein kinase domain occupies 4–303; that stretch reads YEKLEKVGEG…AKAALDHPYF (300 aa). ATP-binding positions include 10-18 and K33; that span reads VGEGTYGKV. The residue at position 15 (Y15) is a Phosphotyrosine. Catalysis depends on D144, which acts as the Proton acceptor. T178 is subject to Phosphothreonine.

The protein belongs to the protein kinase superfamily. CMGC Ser/Thr protein kinase family. CDC2/CDKX subfamily. As to quaternary structure, interacts with CKS1. In terms of tissue distribution, expressed in flowers.

The catalysed reaction is L-seryl-[protein] + ATP = O-phospho-L-seryl-[protein] + ADP + H(+). The enzyme catalyses L-threonyl-[protein] + ATP = O-phospho-L-threonyl-[protein] + ADP + H(+). It catalyses the reaction [DNA-directed RNA polymerase] + ATP = phospho-[DNA-directed RNA polymerase] + ADP + H(+). Functionally, together with CDKB1-1, promotes both the last division in the stomatal cell lineage as well as the number of stomata. In collaboration with MYB124 and MYB88, restrict the G1/S transition and chloroplast and nuclear number during stomatal formation, and normally maintain fate and developmental progression throughout the stomatal cell lineage. The protein is Cyclin-dependent kinase B1-2 (CDKB1-2) of Arabidopsis thaliana (Mouse-ear cress).